The primary structure comprises 119 residues: Large ribosomal subunit protein uL18 (119 aa).

The protein belongs to the universal ribosomal protein uL18 family. In terms of assembly, part of the 50S ribosomal subunit; part of the 5S rRNA/L5/L18/L25 subcomplex. Contacts the 5S and 23S rRNAs.

Its function is as follows. This is one of the proteins that bind and probably mediate the attachment of the 5S RNA into the large ribosomal subunit, where it forms part of the central protuberance. In Lactobacillus delbrueckii subsp. bulgaricus (strain ATCC 11842 / DSM 20081 / BCRC 10696 / JCM 1002 / NBRC 13953 / NCIMB 11778 / NCTC 12712 / WDCM 00102 / Lb 14), this protein is Large ribosomal subunit protein uL18.